Reading from the N-terminus, the 124-residue chain is uncharacterized protein (124 aa).

The N-terminal stretch at 1-21 (MFLLSLLHFFHPSLIPSLSLS) is a signal peptide.

This is an uncharacterized protein from Schizosaccharomyces pombe (strain 972 / ATCC 24843) (Fission yeast).